The sequence spans 487 residues: Arginine ADP-riboxanase OspC3 (487 aa).

Positions 1-14 are enriched in polar residues; sequence MRVETHSPSFTNPN. The interval 1–41 is disordered; sequence MRVETHSPSFTNPNPAEACSGDPTEMGSRLSGVSRAPLPHA. NAD(+)-binding residues include histidine 137, glutamine 138, serine 139, serine 164, asparagine 167, and threonine 168. Glutamate 325 is an active-site residue. ANK repeat units follow at residues 368–398 and 444–473; these read DAVT…EAKD and RGDT…DRNL.

The protein belongs to the OspC family.

The protein localises to the secreted. It localises to the host cytoplasm. It catalyses the reaction L-arginyl-[protein] + NAD(+) = ADP-riboxanated L-argininyl-[protein] + nicotinamide + NH4(+) + H(+). Functionally, ADP-riboxanase effector that inhibits host cell pyroptosis. Acts by mediating arginine ADP-riboxanation of host CASP4/CASP11, blocking CASP4/CASP11 autoprocessing. This prevents CASP4 activation and ability to recognize and cleave GSDMD, thereby inhibiting LPS-induced pyroptosis. ADP-riboxanation takes place in two steps: OspC3 first catalyzes ADP-ribosylation of target Arg, and then initiates a deamination to remove one N-omega group. This is Arginine ADP-riboxanase OspC3 from Chromobacterium sp. (strain ATCC 53434 / SC 14030).